The following is a 297-amino-acid chain: Ribosomal RNA small subunit methyltransferase A (297 aa).

The S-adenosyl-L-methionine site is built by N31, L33, G58, E79, D104, and N129.

This sequence belongs to the class I-like SAM-binding methyltransferase superfamily. rRNA adenine N(6)-methyltransferase family. RsmA subfamily.

Its subcellular location is the cytoplasm. The enzyme catalyses adenosine(1518)/adenosine(1519) in 16S rRNA + 4 S-adenosyl-L-methionine = N(6)-dimethyladenosine(1518)/N(6)-dimethyladenosine(1519) in 16S rRNA + 4 S-adenosyl-L-homocysteine + 4 H(+). Its function is as follows. Specifically dimethylates two adjacent adenosines (A1518 and A1519) in the loop of a conserved hairpin near the 3'-end of 16S rRNA in the 30S particle. May play a critical role in biogenesis of 30S subunits. In Staphylococcus aureus (strain Mu3 / ATCC 700698), this protein is Ribosomal RNA small subunit methyltransferase A.